An 85-amino-acid chain; its full sequence is Sodium channel neurotoxin MeuNaTxalpha-1 (85 aa).

A signal peptide spans 1–19 (MNSLVMISLALLVMTGVES). The LCN-type CS-alpha/beta domain maps to 21 to 83 (RDGYIADDKN…VPIKVSGKCN (63 aa)). A specificity module, loop 1 region spans residues 27–31 (DDKNC). 4 disulfide bridges follow: Cys31/Cys82, Cys35/Cys55, Cys41/Cys65, and Cys45/Cys67. Specificity module, loop regions lie at residues 58–62 (AGQYG) and 75–83 (PIKVSGKCN). Asn83 is subject to Asparagine amide.

The protein belongs to the long (4 C-C) scorpion toxin superfamily. Sodium channel inhibitor family. Alpha subfamily. C-terminal amidation does not appear to play an important role in activity, since the non-amidated recombinant toxin and the native toxin (which is amidated) show similar activities on all sodium channels tested. In terms of tissue distribution, expressed by the venom gland.

It localises to the secreted. Functionally, alpha toxins bind voltage-independently at site-3 of sodium channels (Nav) and inhibit the inactivation of the activated channels, thereby blocking neuronal transmission. This toxin inhibits inactivation of Nav1.6/SCN8A (EC(50)=3.1 uM) and drosophila DmNav1 (EC(50)=1.17 uM). It also shows a weak inhibition of inactivation on Nav1.2/SCN2A Nav1.3/SCN3A, and Nav1.7/SCN9A. The toxin (1 uM) does not significantly shift the midpoint of activation at the two channels, but induces a significant depolarizing shift in the V(1/2) of inactivation of the channels. The toxin has also been shown to dose-dependently stimulates intracellular signaling in DRG neurons through activation of two kinases (type II protein kinase A (PKA-II) and MAP kinases 1/3 (MAPK1/MAPK3)). Nav1.2/SCN2A is strongly suggested to be the target channel predominantly involved in this activation. In vivo, the toxin induces a dose-dependent thermal hyperalgesia lasting 30-45 minutes. This Mesobuthus eupeus (Lesser Asian scorpion) protein is Sodium channel neurotoxin MeuNaTxalpha-1.